We begin with the raw amino-acid sequence, 1159 residues long: WASH complex subunit 5 (1159 aa).

S917 carries the phosphoserine modification.

This sequence belongs to the strumpellin family. In terms of assembly, component of the WASH core complex also described as WASH regulatory complex (SHRC) composed of WASH (WASHC1, WASH2P or WASH3P), WASHC2 (WASHC2A or WASHC2C), WASHC3, WASHC4 and WASHC5. The WASH core complex associates via WASHC2 with the F-actin-capping protein dimer (formed by CAPZA1, CAPZA2 or CAPZA3 and CAPZB) in a transient or substoichiometric manner which was initially described as WASH complex. Interacts with VCP, PI4K2A.

It is found in the cytoplasm. The protein resides in the cytosol. It localises to the endoplasmic reticulum. The protein localises to the early endosome. In terms of biological role, acts as a component of the WASH core complex that functions as a nucleation-promoting factor (NPF) at the surface of endosomes, where it recruits and activates the Arp2/3 complex to induce actin polymerization, playing a key role in the fission of tubules that serve as transport intermediates during endosome sorting. May be involved in axonal outgrowth. Involved in cellular localization of ADRB2. Involved in cellular trafficking of BLOC-1 complex cargos such as ATP7A and VAMP7. The sequence is that of WASH complex subunit 5 from Pongo abelii (Sumatran orangutan).